The following is a 1070-amino-acid chain: DNA-directed RNA polymerase subunit beta (1070 aa).

This sequence belongs to the RNA polymerase beta chain family. As to quaternary structure, in plastids the minimal PEP RNA polymerase catalytic core is composed of four subunits: alpha, beta, beta', and beta''. When a (nuclear-encoded) sigma factor is associated with the core the holoenzyme is formed, which can initiate transcription.

Its subcellular location is the plastid. The protein localises to the chloroplast. It carries out the reaction RNA(n) + a ribonucleoside 5'-triphosphate = RNA(n+1) + diphosphate. Its function is as follows. DNA-dependent RNA polymerase catalyzes the transcription of DNA into RNA using the four ribonucleoside triphosphates as substrates. This chain is DNA-directed RNA polymerase subunit beta, found in Platanus occidentalis (Sycamore).